Reading from the N-terminus, the 666-residue chain is DNA mismatch repair protein MutL (666 aa).

It belongs to the DNA mismatch repair MutL/HexB family.

Its function is as follows. This protein is involved in the repair of mismatches in DNA. It is required for dam-dependent methyl-directed DNA mismatch repair. May act as a 'molecular matchmaker', a protein that promotes the formation of a stable complex between two or more DNA-binding proteins in an ATP-dependent manner without itself being part of a final effector complex. This Clostridium botulinum (strain ATCC 19397 / Type A) protein is DNA mismatch repair protein MutL.